The following is a 353-amino-acid chain: MEKKAHFVKRDFPPREAPSLLLLLLVVAVLLLNALLYLYLGNLHGSSGRADAEPSLCPYGSFKLGPVKNCSPWLSCEAINREVRKLKCVGEGAVKKVFLSEWKENKVVISQLTKPELKEDFLHGLKMLKALQSKHVVRLLGYCEKQFTILTEYHPLGSLRGLNETLHIPKYKSMNTWHRRLMLAIDYVSIIRYLHSSPLGTLVMCDSNDLDKALSQYLLTSDFHILVNDLDALPLVNRSAGRLVKCGHRELWGEFVAPEQRWPYGEDVPFDDDLMPPYDEKTDIWKIPDVSNFFLGHVEGSDIVRLHLFDIHAACKKKDPAERPSAQEVLDTYKKVLTLLIREAAMPSTREML.

The Cytoplasmic segment spans residues 1 to 19 (MEKKAHFVKRDFPPREAPS). A helical; Signal-anchor for type II membrane protein membrane pass occupies residues 20–40 (LLLLLLVVAVLLLNALLYLYL). The Lumenal segment spans residues 41 to 353 (GNLHGSSGRA…AAMPSTREML (313 aa)). Positions 83–353 (VRKLKCVGEG…AAMPSTREML (271 aa)) constitute a Protein kinase domain. Residues N163 and N237 are each glycosylated (N-linked (GlcNAc...) asparagine).

The protein belongs to the protein kinase superfamily. Ser/Thr protein kinase family. STKL subfamily.

The protein localises to the endoplasmic reticulum membrane. The enzyme catalyses 3-O-[beta-D-GalNAc-(1-&gt;3)-beta-D-GlcNAc-(1-&gt;4)-alpha-D-Man]-L-Thr-[protein] + ATP = 3-O-[beta-D-GalNAc-(1-&gt;3)-beta-D-GlcNAc-(1-&gt;4)-(O-6-P-alpha-D-Man)]-Thr-[protein] + ADP + H(+). In terms of biological role, protein O-mannose kinase that specifically mediates phosphorylation at the 6-position of an O-mannose of the trisaccharide (N-acetylgalactosamine (GalNAc)-beta-1,3-N-acetylglucosamine (GlcNAc)-beta-1,4-mannose) to generate phosphorylated O-mannosyl trisaccharide (N-acetylgalactosamine-beta-1,3-N-acetylglucosamine-beta-1,4-(phosphate-6-)mannose). Phosphorylated O-mannosyl trisaccharide is a carbohydrate structure present in alpha-dystroglycan (DAG1), which is required for binding laminin G-like domain-containing extracellular proteins with high affinity. Only shows kinase activity when the GalNAc-beta-3-GlcNAc-beta-terminus is linked to the 4-position of O-mannose, suggesting that this disaccharide serves as the substrate recognition motif. The polypeptide is Protein O-mannose kinase (POMK) (Gallus gallus (Chicken)).